A 986-amino-acid chain; its full sequence is MSKRVSAFGAEGDDEPQEKPMKPFISFSSNINNNNNSNNNNNNNNNNNNNNNNNNNKNNIGTGINLNIKNNNNINNNNNKSGFPVKKSRFNGEDDDDDYFFSNVPPKSSMTTLNKSPPNFENASSNNNNNNNNNNQESDSKNQNEDEDDEIDPLDAFMENVNAQAAIDNSKSIEKGQQQQQSLKSKRDDIDNEDDEEIFYKLRQKQLANKSSKQQQDDDVDYSSLDDDDGYFDDEESLKNGQSKGKRIIEPLPPIDHSKEEYIEFNKIFYEEHPDIANLTEEQVFEIRKNLDIRMTGTDLINPVTSFGHYGFDDILLQAIAKQSIETPTPIQKQAIPIALSGRDLIAIAKTGSGKTATFIWPSISHIMDQPYLEKGDGPIALFLAPTRELAHQIYLETLKYSKYFKLKTTVLYGGVSKQQQCKELKAGCEIIVATPGRLIDMIKLKATKLNRVSYLVLDEADKMFDFGFGPQVLSIVNHVRPDRQTLLFSATFKPNVEEFARTILSDPIKISIGMIGSANSDITQIVQVLKSDSDKWNWLTNQLALLLSQGSVLIFVSTKVAVEQLSSNLTKFGFQTCTLHGDKNQIERSQTIQTFKEGKINILIATDVAARGLDIPLIKNVVNYDTSRDIESHTHRIGRTGRAGNTGVAYTLITPKDIHFSVDLIKNLESASQFVPPELIDVAMNNPHFKRERGGGGGGSNRGRGRGGGGVGYRRNSRGGGVAFNSNRDSSRSDSQNKFIPAQSVEGGRLFNPNNTDNSEINNENEKSINNENKFSNNNSGSSNDRNSINYRNNSFNNNSNNTNNSGNSNFNNSNSNNGYSNNNYNNNYKNNSNYNNSNNNNNSYYNNNNSNNNNNSNYNNSSNNNNNNNNNYRNGNNNNNYNNNNYYNNNNSNNNSSNNNNSNNNSSNNNFNNNFNNNNNNNDNSNFNRALPFNDFNNNNNNSNNNNFNYNNNFNNSYNANNSNHYKNNNNSNNFNQRSQYNRR.

Disordered stretches follow at residues 1–149, 165–192, and 206–252; these read MSKR…DEDD, AAID…DIDN, and QLAN…IEPL. The span at 29-82 shows a compositional bias: low complexity; the sequence is SNINNNNNSNNNNNNNNNNNNNNNNNNNKNNIGTGINLNIKNNNNINNNNNKSG. Positions 105 to 117 are enriched in polar residues; sequence PPKSSMTTLNKSP. The segment covering 119–137 has biased composition (low complexity); the sequence is NFENASSNNNNNNNNNNQE. The span at 217-236 shows a compositional bias: acidic residues; that stretch reads DDDVDYSSLDDDDGYFDDEE. Positions 305 to 333 match the Q motif motif; that stretch reads TSFGHYGFDDILLQAIAKQSIETPTPIQK. The Helicase ATP-binding domain maps to 336–511; sequence IPIALSGRDL…RTILSDPIKI (176 aa). 349–356 serves as a coordination point for ATP; sequence AKTGSGKT. The DEAD box signature appears at 459-462; it reads DEAD. The Helicase C-terminal domain maps to 522–684; the sequence is DITQIVQVLK…FVPPELIDVA (163 aa). The tract at residues 688–986 is disordered; the sequence is PHFKRERGGG…FNQRSQYNRR (299 aa). Residues 696-723 show a composition bias toward gly residues; the sequence is GGGGGSNRGRGRGGGGVGYRRNSRGGGV. Low complexity-rich tracts occupy residues 753–764 and 771–978; these read NPNNTDNSEINN and NNEN…NNFN.

It belongs to the DEAD box helicase family. DDX42 subfamily.

The protein localises to the nucleus. The enzyme catalyses ATP + H2O = ADP + phosphate + H(+). Its function is as follows. probable ATP-dependent RNA helicase which may bind to partially double-stranded RNAs (dsRNAs) in order to unwind RNA secondary structures. This is Probable ATP-dependent RNA helicase ddx42 (ddx42) from Dictyostelium discoideum (Social amoeba).